Here is a 357-residue protein sequence, read N- to C-terminus: DNA replication and repair protein RecF (357 aa).

Residue 30-37 participates in ATP binding; it reads GANGSGKT.

The protein belongs to the RecF family.

The protein resides in the cytoplasm. Functionally, the RecF protein is involved in DNA metabolism; it is required for DNA replication and normal SOS inducibility. RecF binds preferentially to single-stranded, linear DNA. It also seems to bind ATP. The protein is DNA replication and repair protein RecF of Salmonella schwarzengrund (strain CVM19633).